Reading from the N-terminus, the 1151-residue chain is Importin beta (1151 aa).

HEAT repeat units lie at residues 1–36 (MDLA…KQEE), 37–82 (PASY…GNGN), 83–132 (PECV…VAQF), 133–175 (PEFF…TKIG), 176–222 (GKAI…DSVI), 223–269 (PNSV…AVLK), 270–316 (PMVK…RAKK), 317–377 (AISE…KVIF), 378–416 (PLIK…LVTK), 417–453 (EDIV…EDYA), 454–495 (PTFQ…HLKK), 496–540 (AETY…LKND), 541–593 (FADM…AGTL), 594–642 (PQLF…PETF), 643–704 (PKYM…MRKT), 705–756 (PAAF…TVAS), 757–811 (PPAV…SYTE), 812–880 (TVNK…ALGD), 881–932 (LSLD…KYLS), 933–978 (PANS…YEGD), 979–1027 (PGLA…AQAF), 1028–1074 (PTEL…ARND), 1075–1120 (PNFM…VLTQ), and 1121–1151 (IAGH…SVRQ).

The protein belongs to the importin beta family.

The protein resides in the nucleus intermembrane space. The protein localises to the cytoplasm. It localises to the nucleus. Functions in nuclear protein import as nuclear transport receptor. Involved in encystation process. Constitutive expression enhances cyst production and increases transcription of endogenous genes involved in encystation. Level of mRNA of the transcriptional factor myb1-like protein increases in early stages of the encystation process followed by increased mRNAs of the cyst wall proteins cwp1-3. The protein is Importin beta of Giardia intestinalis (strain ATCC 50803 / WB clone C6) (Giardia lamblia).